A 328-amino-acid chain; its full sequence is Gonadotropin-releasing hormone receptor (328 aa).

Over 1–38 the chain is Extracellular; the sequence is MANSDSPEQNENHCSSINSSIPLTPGSLPTLTLSGKIR. The N-linked (GlcNAc...) asparagine glycan is linked to Asn18. The helical transmembrane segment at 39–58 threads the bilayer; sequence VTVTFFLFLLSTIFNTSFLL. The Cytoplasmic portion of the chain corresponds to 59-77; that stretch reads KLQNWTQRKEKRKKLSRMK. Residues 78–97 form a helical membrane-spanning segment; that stretch reads LLLKHLTLANLLETLIVMPL. The Extracellular portion of the chain corresponds to 98 to 115; sequence DGMWNITVQWYAGELLCK. N-linked (GlcNAc...) asparagine glycosylation is present at Asn102. An intrachain disulfide couples Cys114 to Cys196. A helical membrane pass occupies residues 116–137; it reads VLSYLKLFSMYAPAFMMVVISL. The Cytoplasmic segment spans residues 138–164; the sequence is DRSLAITKPLAVKSNSKLGQFMIGLAW. The helical transmembrane segment at 165–184 threads the bilayer; the sequence is LLSSIFAGPQLYIFGMIHLA. Topologically, residues 185 to 212 are extracellular; it reads DDSGQTEGFSQCVTHCSFPQWWHQAFYN. The chain crosses the membrane as a helical span at residues 213 to 232; sequence FFTFSCLFIIPLLIMVICNA. The Cytoplasmic segment spans residues 233–281; it reads KIIFTLTRVLHQDPHKLQLNQSKNNIPRARLRTLKMTVAFATSFTVCWT. The chain crosses the membrane as a helical span at residues 282 to 300; sequence PYYVLGIWYWFDPDMVNRV. The Extracellular portion of the chain corresponds to 301 to 306; it reads SDPVNH. Residues 307 to 326 traverse the membrane as a helical segment; the sequence is FFFLFAFLNPCFNPLIYGYF. Residues 327–328 are Cytoplasmic-facing; sequence SL.

The protein belongs to the G-protein coupled receptor 1 family.

Its subcellular location is the cell membrane. In terms of biological role, receptor for gonadotropin releasing hormone (GnRH) that mediates the action of GnRH to stimulate the secretion of the gonadotropic hormones luteinizing hormone (LH) and follicle-stimulating hormone (FSH). This receptor mediates its action by association with G-proteins that activate a phosphatidylinositol-calcium second messenger system. The sequence is that of Gonadotropin-releasing hormone receptor (GNRHR) from Bos mutus grunniens (Wild yak).